A 427-amino-acid polypeptide reads, in one-letter code: C4-dicarboxylate transport protein (427 aa).

9 helical membrane-spanning segments follow: residues 5–25, 44–64, 76–96, 142–162, 184–206, 222–242, 307–327, 330–350, and 352–372; these read IFSS…FLGH, LIKM…IAGM, IALL…LCVV, IGAF…LFGF, VIFG…AMAF, LIAC…GSIA, IYLT…LDLF, ITLL…TGSG, and IVLA…LALI.

This sequence belongs to the dicarboxylate/amino acid:cation symporter (DAACS) (TC 2.A.23) family.

The protein resides in the cell inner membrane. In terms of biological role, responsible for the transport of dicarboxylates such as succinate, fumarate, and malate from the periplasm across the membrane. This is C4-dicarboxylate transport protein from Aeromonas salmonicida (strain A449).